A 332-amino-acid polypeptide reads, in one-letter code: MEKQRLTAQLSSLRVPLFSVPWPGQCSNKAEVIEARMMKWADEHNLLVTDEYRNRVIRTRYGLLAARCYPNAGEELLQAIADCLVWFFLADDLFVDRVEVATDETIRNLTAMVDVLDLNVAGSPPVFGELAWLDVCQRLRRLLQAEAFERFAQGMRLWATTAALQILNHLRPTSVGMREYQTIRRHTSGMNPCTSLADAANKGSVQACEFYDADVQTLVRQTNNIVCWANDIQSLRIEIHQPGQFRNMVTIYAQQGQSLQDAVETTATRVNKEIASFCELADAVTARPISDELHGLIDGLKYWIRGYLDWVVHDTLRYADQFIESDADDRRF.

Mg(2+) contacts are provided by Asp-91 and Asp-96. The DDXXXD motif motif lies at 91-96 (DDLFVD). Substrate is bound at residue Arg-184. Mg(2+)-binding residues include Asn-230, Ser-234, and Glu-238.

This sequence belongs to the terpene synthase family. Requires Mg(2+) as cofactor.

The enzyme catalyses (2E,6E)-farnesyl diphosphate + H2O = (+)-corvol ether B + diphosphate. It carries out the reaction (2E,6E)-farnesyl diphosphate + H2O = (+)-corvol ether A + diphosphate. Terpene synthase that catalyzes the conversion of (2E,6E)-farnesyl diphosphate (FPP) into sesquiterpenes which are important for fungi-environment interactions. Produces a mixture consisting of 8 sesquiterpenes including corvol ethers A and B, as well as traces of epizonarene, gamma-cadinene, delta-cadinene, alpha-cadinene, alpha-cadinol, and an unidentified sesquiterpene. The major product is corvol ether B. This Metarhizium brunneum (strain ARSEF 3297) protein is Sesquiterpene synthase MBR_10393.